The sequence spans 629 residues: tRNA uridine 5-carboxymethylaminomethyl modification enzyme MnmG (629 aa).

Residues 13–18 (GGGHAG), Val125, and Ser180 contribute to the FAD site. 273–287 (GPRYCPSIEDKVMRF) contributes to the NAD(+) binding site. Gln370 contributes to the FAD binding site.

It belongs to the MnmG family. In terms of assembly, homodimer. Heterotetramer of two MnmE and two MnmG subunits. FAD is required as a cofactor.

It localises to the cytoplasm. Functionally, NAD-binding protein involved in the addition of a carboxymethylaminomethyl (cmnm) group at the wobble position (U34) of certain tRNAs, forming tRNA-cmnm(5)s(2)U34. The chain is tRNA uridine 5-carboxymethylaminomethyl modification enzyme MnmG from Pasteurella multocida (strain Pm70).